The primary structure comprises 229 residues: Ribonuclease 3 (229 aa).

One can recognise an RNase III domain in the interval 7 to 132; it reads ISAFCDRIGH…VIAAVYRDAG (126 aa). Glu-45 is a binding site for Mg(2+). Asp-49 is an active-site residue. Mg(2+) is bound by residues Asp-118 and Glu-121. The active site involves Glu-121. One can recognise a DRBM domain in the interval 157–226; the sequence is DPKTALQEWA…AKALLAQVES (70 aa).

Belongs to the ribonuclease III family. As to quaternary structure, homodimer. Mg(2+) serves as cofactor.

The protein resides in the cytoplasm. The enzyme catalyses Endonucleolytic cleavage to 5'-phosphomonoester.. Digests double-stranded RNA. Involved in the processing of primary rRNA transcript to yield the immediate precursors to the large and small rRNAs (23S and 16S). Processes some mRNAs, and tRNAs when they are encoded in the rRNA operon. Processes pre-crRNA and tracrRNA of type II CRISPR loci if present in the organism. This is Ribonuclease 3 from Dinoroseobacter shibae (strain DSM 16493 / NCIMB 14021 / DFL 12).